The primary structure comprises 479 residues: Chromosomal replication initiator protein DnaA (479 aa).

The tract at residues 1 to 74 (MFSGVVMAWQ…RSLTGVDSSI (74 aa)) is domain I, interacts with DnaA modulators. The domain II stretch occupies residues 74-142 (ITDVRFLEKK…SVPKNNASIR (69 aa)). A domain III, AAA+ region region spans residues 143 to 360 (ALHPRYTFDE…SAITAIGARA (218 aa)). ATP contacts are provided by Gly187, Gly189, Lys190, and Ser191. Residues 361–479 (RLMGGYIDMN…NLLSDKVKQI (119 aa)) form a domain IV, binds dsDNA region.

It belongs to the DnaA family. Oligomerizes as a right-handed, spiral filament on DNA at oriC.

The protein resides in the cytoplasm. Its function is as follows. Plays an essential role in the initiation and regulation of chromosomal replication. ATP-DnaA binds to the origin of replication (oriC) to initiate formation of the DNA replication initiation complex once per cell cycle. Binds the DnaA box (a 9 base pair repeat at the origin) and separates the double-stranded (ds)DNA. Forms a right-handed helical filament on oriC DNA; dsDNA binds to the exterior of the filament while single-stranded (ss)DNA is stabiized in the filament's interior. The ATP-DnaA-oriC complex binds and stabilizes one strand of the AT-rich DNA unwinding element (DUE), permitting loading of DNA polymerase. After initiation quickly degrades to an ADP-DnaA complex that is not apt for DNA replication. Binds acidic phospholipids. The chain is Chromosomal replication initiator protein DnaA from Desulfotalea psychrophila (strain LSv54 / DSM 12343).